A 282-amino-acid chain; its full sequence is ADP-ribosyl cyclase/cyclic ADP-ribose hydrolase (282 aa).

An N-terminal signal peptide occupies residues 1-24 (MSPVAIIACVCLAVTLTSISPSEA). Intrachain disulfides connect Cys39/Cys58, Cys75/Cys155, Cys136/Cys149, Cys230/Cys251, and Cys263/Cys272.

Belongs to the ADP-ribosyl cyclase family. In terms of processing, has different isoforms which may be the result of different amounts of phosphorylation. In terms of tissue distribution, immature occoyctes. Oocytes.

It is found in the cytoplasmic vesicle. The enzyme catalyses NAD(+) = cyclic ADP-beta-D-ribose + nicotinamide + H(+). It carries out the reaction nicotinate + NADP(+) = nicotinate-adenine dinucleotide phosphate + nicotinamide. It catalyses the reaction 2'-phospho-cyclic ADP-ribose + nicotinate = nicotinate-adenine dinucleotide phosphate. Its activity is regulated as follows. Activity is presumably regulated by its sequestration in vesicles before egg fertilization. After fertilization and upon NADase release, it could then be regulated via its potential phosphorylation sites. Functionally, synthesizes cyclic ADP-ribose (cADPR), a second messenger for calcium mobilization from endoplasmic reticulum; ADP-ribose is a minor product. Synthesizes the Ca(2+) mobilizer nicotinate-adenine dinucleotide phosphate from 2'-phospho-cADPR and nicotinic acid as well as from NADP(+) and nicotinic acid; with NADP(+) as substrate preferentially catalyzes NADP(+) hydrolysis rather than NAADP(+) synthesis, about 70-fold better at pH 7.4. Has cADPR hydrolase activity at very high enzyme concentrations, which is probably not physiological. The conversion of NAD(+) into ADP-ribose is also only observed at high enzyme concentrations and results from the hydrolysis of cADP-ribose. The sequence is that of ADP-ribosyl cyclase/cyclic ADP-ribose hydrolase from Aplysia californica (California sea hare).